The sequence spans 60 residues: CAMPATH-1 antigen (60 aa).

The N-terminal stretch at 1–24 (MKRFLFLLLTISLLVMVQIQTGVT) is a signal peptide. Asparagine 27 is a glycosylation site (N-linked (GlcNAc...) asparagine). Serine 35 carries GPI-anchor amidated serine lipidation. A propeptide spans 36–60 (ASSNLSGGGFLFFVANAIIHLFYFS) (removed in mature form). N-linked (GlcNAc...) asparagine glycosylation occurs at asparagine 39.

The protein resides in the cell membrane. Its function is as follows. May play a role in carrying and orienting carbohydrate, as well as having a more specific role. This chain is CAMPATH-1 antigen (CD52), found in Macaca fascicularis (Crab-eating macaque).